Here is a 378-residue protein sequence, read N- to C-terminus: UDP-N-acetylglucosamine--N-acetylmuramyl-(pentapeptide) pyrophosphoryl-undecaprenol N-acetylglucosamine transferase (378 aa).

UDP-N-acetyl-alpha-D-glucosamine contacts are provided by residues 14–16 (TGG), Asn-125, Arg-165, Ser-193, and Gln-293.

Belongs to the glycosyltransferase 28 family. MurG subfamily.

It is found in the cell inner membrane. It carries out the reaction di-trans,octa-cis-undecaprenyl diphospho-N-acetyl-alpha-D-muramoyl-L-alanyl-D-glutamyl-meso-2,6-diaminopimeloyl-D-alanyl-D-alanine + UDP-N-acetyl-alpha-D-glucosamine = di-trans,octa-cis-undecaprenyl diphospho-[N-acetyl-alpha-D-glucosaminyl-(1-&gt;4)]-N-acetyl-alpha-D-muramoyl-L-alanyl-D-glutamyl-meso-2,6-diaminopimeloyl-D-alanyl-D-alanine + UDP + H(+). It functions in the pathway cell wall biogenesis; peptidoglycan biosynthesis. Its function is as follows. Cell wall formation. Catalyzes the transfer of a GlcNAc subunit on undecaprenyl-pyrophosphoryl-MurNAc-pentapeptide (lipid intermediate I) to form undecaprenyl-pyrophosphoryl-MurNAc-(pentapeptide)GlcNAc (lipid intermediate II). The chain is UDP-N-acetylglucosamine--N-acetylmuramyl-(pentapeptide) pyrophosphoryl-undecaprenol N-acetylglucosamine transferase from Bartonella bacilliformis (strain ATCC 35685 / KC583 / Herrer 020/F12,63).